Reading from the N-terminus, the 138-residue chain is Class I hydrophobin 3 (138 aa).

Residues 1-16 (MRFFLAITALVAAVTA) form the signal peptide. Intrachain disulfides connect C40-C111, C48-C105, C49-C87, and C112-C130.

It belongs to the fungal hydrophobin family. As to quaternary structure, self-assembles to form functional amyloid fibrils called rodlets. Self-assembly into fibrillar rodlets occurs spontaneously at hydrophobic:hydrophilic interfaces and the rodlets further associate laterally to form amphipathic monolayers.

It localises to the secreted. Its subcellular location is the cell wall. Functionally, aerial growth, conidiation, and dispersal of filamentous fungi in the environment rely upon a capability of their secreting small amphipathic proteins called hydrophobins (HPBs) with low sequence identity. Class I can self-assemble into an outermost layer of rodlet bundles on aerial cell surfaces, conferring cellular hydrophobicity that supports fungal growth, development and dispersal; whereas Class II form highly ordered films at water-air interfaces through intermolecular interactions but contribute nothing to the rodlet structure. HYD3 is a class I hydrophobin that contributes to the formation of aerial hyphae and fruiting bodies. This is Class I hydrophobin 3 from Cordyceps militaris (Caterpillar fungus).